Reading from the N-terminus, the 1005-residue chain is DNA-directed RNA polymerase subunit beta (1005 aa).

This sequence belongs to the RNA polymerase beta chain family. In plastids the minimal PEP RNA polymerase catalytic core is composed of four subunits: alpha, beta, beta', and beta''. When a (nuclear-encoded) sigma factor is associated with the core the holoenzyme is formed, which can initiate transcription (Potential).

The protein resides in the plastid. It localises to the apicoplast. It carries out the reaction RNA(n) + a ribonucleoside 5'-triphosphate = RNA(n+1) + diphosphate. Functionally, DNA-dependent RNA polymerase catalyzes the transcription of DNA into RNA using the four ribonucleoside triphosphates as substrates. This Theileria parva (East coast fever infection agent) protein is DNA-directed RNA polymerase subunit beta (rpoB).